The following is a 404-amino-acid chain: MAEILERSGYLVKVRVEVPADRVKASYEALLKDLASRVRVPGFRPGKAPLKVVEARLGREALLQDLKERLVEETYPEAVRELGLSPVAARVVEQDLSEGEGFRYVAEVENYPEVRLPDWRSFALEVSPPEVTEEMVEKALEELRQRYAELVPVEREAQEKDHLFVRTEEGAEFPIDLAKALPHVREALLGKKAGDVVMVPVLNDKGEKVREVRTEVLEVKTLKLPELDEEFAKTLEAESLEDLKNRVRESLKRQAERAYEEARERAFLEKLAEGLEVEIPPSMLRAEERHLLEHLAEDLYRQGISLEAYLEALKEKGELEKFQEDLRKEAEKRVRIALAREKLAEELNPEVSEEEWQAYLQAAARAYGVAVQDLRRQFGEEGLARLKERLRQDKAVQEALKALG.

The 66-residue stretch at Lys160–Pro225 folds into the PPIase FKBP-type domain.

The protein belongs to the FKBP-type PPIase family. Tig subfamily.

The protein localises to the cytoplasm. It catalyses the reaction [protein]-peptidylproline (omega=180) = [protein]-peptidylproline (omega=0). Involved in protein export. Acts as a chaperone by maintaining the newly synthesized protein in an open conformation. Functions as a peptidyl-prolyl cis-trans isomerase. The protein is Trigger factor of Thermus thermophilus (strain ATCC 27634 / DSM 579 / HB8).